A 486-amino-acid polypeptide reads, in one-letter code: 2-succinylbenzoate--CoA ligase (486 aa).

The protein belongs to the ATP-dependent AMP-binding enzyme family. MenE subfamily.

The catalysed reaction is 2-succinylbenzoate + ATP + CoA = 2-succinylbenzoyl-CoA + AMP + diphosphate. It participates in quinol/quinone metabolism; 1,4-dihydroxy-2-naphthoate biosynthesis; 1,4-dihydroxy-2-naphthoate from chorismate: step 5/7. The protein operates within quinol/quinone metabolism; menaquinone biosynthesis. In terms of biological role, converts 2-succinylbenzoate (OSB) to 2-succinylbenzoyl-CoA (OSB-CoA). The sequence is that of 2-succinylbenzoate--CoA ligase from Bacillus subtilis (strain 168).